Here is a 647-residue protein sequence, read N- to C-terminus: 1-deoxy-D-xylulose-5-phosphate synthase (647 aa).

Residues H88 and 129–131 (GHA) contribute to the thiamine diphosphate site. Residue D160 participates in Mg(2+) binding. Thiamine diphosphate is bound by residues 161–162 (GA), N189, Y300, and E377. Residue N189 coordinates Mg(2+).

It belongs to the transketolase family. DXPS subfamily. As to quaternary structure, homodimer. Mg(2+) is required as a cofactor. It depends on thiamine diphosphate as a cofactor.

It catalyses the reaction D-glyceraldehyde 3-phosphate + pyruvate + H(+) = 1-deoxy-D-xylulose 5-phosphate + CO2. The protein operates within metabolic intermediate biosynthesis; 1-deoxy-D-xylulose 5-phosphate biosynthesis; 1-deoxy-D-xylulose 5-phosphate from D-glyceraldehyde 3-phosphate and pyruvate: step 1/1. In terms of biological role, catalyzes the acyloin condensation reaction between C atoms 2 and 3 of pyruvate and glyceraldehyde 3-phosphate to yield 1-deoxy-D-xylulose-5-phosphate (DXP). The sequence is that of 1-deoxy-D-xylulose-5-phosphate synthase from Dehalococcoides mccartyi (strain CBDB1).